The sequence spans 355 residues: Tyrosine recombinase XerC (355 aa).

Residues 4–89 (TQFDGDIDSF…AVRGFFAWAY (86 aa)) enclose the Core-binding (CB) domain. Residues 138-180 (DDGGAAAASGSGKAAGKTADKSADTVNRSEAPARADKRDNARV) are disordered. Low complexity predominate over residues 141–154 (GAAAASGSGKAAGK). The 192-residue stretch at 158 to 349 (KSADTVNRSE…SIEQLKNRYG (192 aa)) folds into the Tyr recombinase domain. The segment covering 168–178 (APARADKRDNA) has biased composition (basic and acidic residues). Active-site residues include R200, K224, H301, R304, and H327. The active-site O-(3'-phospho-DNA)-tyrosine intermediate is Y336.

This sequence belongs to the 'phage' integrase family. XerC subfamily. In terms of assembly, forms a cyclic heterotetrameric complex composed of two molecules of XerC and two molecules of XerD.

It localises to the cytoplasm. Site-specific tyrosine recombinase, which acts by catalyzing the cutting and rejoining of the recombining DNA molecules. The XerC-XerD complex is essential to convert dimers of the bacterial chromosome into monomers to permit their segregation at cell division. It also contributes to the segregational stability of plasmids. The polypeptide is Tyrosine recombinase XerC (Bifidobacterium longum subsp. infantis (strain ATCC 15697 / DSM 20088 / JCM 1222 / NCTC 11817 / S12)).